The chain runs to 378 residues: tRNA-specific 2-thiouridylase MnmA (378 aa).

Residues 6–13 (AMSGGVDS) and L32 contribute to the ATP site. C101 serves as the catalytic Nucleophile. C101 and C199 form a disulfide bridge. Residue G125 participates in ATP binding. An interaction with tRNA region spans residues 148-150 (KDQ). Residue C199 is the Cysteine persulfide intermediate of the active site.

The protein belongs to the MnmA/TRMU family.

It is found in the cytoplasm. It catalyses the reaction S-sulfanyl-L-cysteinyl-[protein] + uridine(34) in tRNA + AH2 + ATP = 2-thiouridine(34) in tRNA + L-cysteinyl-[protein] + A + AMP + diphosphate + H(+). Catalyzes the 2-thiolation of uridine at the wobble position (U34) of tRNA, leading to the formation of s(2)U34. This Renibacterium salmoninarum (strain ATCC 33209 / DSM 20767 / JCM 11484 / NBRC 15589 / NCIMB 2235) protein is tRNA-specific 2-thiouridylase MnmA.